The sequence spans 441 residues: Ribosomal protein uS12 methylthiotransferase RimO (441 aa).

The MTTase N-terminal domain maps to 8–118 (PKIGFVSLGC…VLQHVHHYVP (111 aa)). Positions 17, 53, 82, 150, 154, and 157 each coordinate [4Fe-4S] cluster. Residues 136–373 (LTPRHYAYLK…MQLQQQISAE (238 aa)) enclose the Radical SAM core domain. One can recognise a TRAM domain in the interval 376 to 441 (QEKVGREILV…DEYDLWGSRV (66 aa)).

The protein belongs to the methylthiotransferase family. RimO subfamily. It depends on [4Fe-4S] cluster as a cofactor.

The protein localises to the cytoplasm. The catalysed reaction is L-aspartate(89)-[ribosomal protein uS12]-hydrogen + (sulfur carrier)-SH + AH2 + 2 S-adenosyl-L-methionine = 3-methylsulfanyl-L-aspartate(89)-[ribosomal protein uS12]-hydrogen + (sulfur carrier)-H + 5'-deoxyadenosine + L-methionine + A + S-adenosyl-L-homocysteine + 2 H(+). Its function is as follows. Catalyzes the methylthiolation of an aspartic acid residue of ribosomal protein uS12. The polypeptide is Ribosomal protein uS12 methylthiotransferase RimO (Salmonella heidelberg (strain SL476)).